The chain runs to 191 residues: UPF0312 protein Sden_2128 (191 aa).

Residues 1-22 (MKKHLLASLLGASLLLPTAVNA) form the signal peptide.

Belongs to the UPF0312 family. Type 1 subfamily.

It localises to the periplasm. In Shewanella denitrificans (strain OS217 / ATCC BAA-1090 / DSM 15013), this protein is UPF0312 protein Sden_2128.